Reading from the N-terminus, the 520-residue chain is Probable DNA ligase (520 aa).

Glu-213 provides a ligand contact to ATP. The active-site N6-AMP-lysine intermediate is the Lys-215. Positions 220, 235, 264, 300, 372, and 378 each coordinate ATP.

Belongs to the ATP-dependent DNA ligase family. Requires Mg(2+) as cofactor.

It carries out the reaction ATP + (deoxyribonucleotide)n-3'-hydroxyl + 5'-phospho-(deoxyribonucleotide)m = (deoxyribonucleotide)n+m + AMP + diphosphate.. Its function is as follows. DNA ligase that seals nicks in double-stranded DNA during DNA replication, DNA recombination and DNA repair. The chain is Probable DNA ligase from Mycobacterium sp. (strain JLS).